Reading from the N-terminus, the 351-residue chain is tRNA-splicing endonuclease (351 aa).

Catalysis depends on residues tyrosine 287, histidine 298, and lysine 329.

This sequence belongs to the tRNA-intron endonuclease family. Archaeal long subfamily. As to quaternary structure, homodimer.

The catalysed reaction is pretRNA = a 3'-half-tRNA molecule with a 5'-OH end + a 5'-half-tRNA molecule with a 2',3'-cyclic phosphate end + an intron with a 2',3'-cyclic phosphate and a 5'-hydroxyl terminus.. Its function is as follows. Endonuclease that removes tRNA introns. Cleaves pre-tRNA at the 5'- and 3'-splice sites to release the intron. The products are an intron and two tRNA half-molecules bearing 2',3' cyclic phosphate and 5'-OH termini. Recognizes a pseudosymmetric substrate in which 2 bulged loops of 3 bases are separated by a stem of 4 bp. This is tRNA-splicing endonuclease from Methanococcoides burtonii (strain DSM 6242 / NBRC 107633 / OCM 468 / ACE-M).